The sequence spans 86 residues: MTKTIFISTKENTGSIEFQIVNFTKKICKLTDHLKLHKKDYLSQRGLRQMLGKRQRLLVYLSKINLPSYNDLILKLKIREAKKDLS.

The protein belongs to the universal ribosomal protein uS15 family. In terms of assembly, part of the 30S ribosomal subunit.

The protein resides in the plastid. The chain is Small ribosomal subunit protein uS15c (rps15) from Cuscuta gronovii (Common dodder).